The following is a 502-amino-acid chain: MQSTTNNNTNKKNHARSNRSDNLSTVVSNRSAYRSASKSASRSNNLSTPGQSRVISYDDDITSDYNTYTINDYIDDPTTDQNTVNDDEGNIYGGNFFDGFIPTSNLFADNYEIKKLDDVIARTNNIMYGGRIPEDQIISTESNNIFGIKDFRVTNTEDTNDDNSNSQSVNSRTDSDNLSARNTSISNSLLTSGRNSASIRNANPLLVRNATSLGNSERNSPDRPSTQGDSSIRGEADNFSGRNASARNSASNKNSASRSSVSNKNSASRSSASRSSVSRNSESIKSSSRNSESRNLESNKNSTSRNLESNKNSASRNSASRNSTSIKSDSKNSDSRNSQTNKSKNQRGGLSEIKGIPVTDKFIGQNEIPTSSLGTHQYEPNYSLTSPGSIISTSSKLNNEAIRGINNRPIAGKNQVYPDTITDTNDLSSFFANTESNTIDQFGGQTSDKNNSTKSNTKYNKSSRKISEISYGTSKRSHNRSSNTSNLKSETDYDIFTANSEL.

Composition is skewed to low complexity over residues 1 to 10 (MQSTTNNNTN), 28 to 47 (SNRS…NNLS), and 155 to 171 (NTED…SVNS). 4 disordered regions span residues 1–57 (MQST…VISY), 155–181 (NTED…LSAR), 212–362 (SLGN…TDKF), and 438–487 (TIDQ…TSNL). Positions 212 to 230 (SLGNSERNSPDRPSTQGDS) are enriched in polar residues. Low complexity-rich tracts occupy residues 242 to 290 (RNAS…SSRN) and 309 to 327 (SNKN…TSIK). A compositionally biased stretch (polar residues) spans 339–348 (QTNKSKNQRG). Positions 446-460 (TSDKNNSTKSNTKYN) are enriched in low complexity. Polar residues predominate over residues 470–487 (SYGTSKRSHNRSSNTSNL).

The protein resides in the virion. This is an uncharacterized protein from Acanthamoeba polyphaga (Amoeba).